We begin with the raw amino-acid sequence, 142 residues long: Large-conductance mechanosensitive channel (142 aa).

3 helical membrane-spanning segments follow: residues 14–34, 38–58, and 82–102; these read VMDL…VTSV, LVMP…NYFL, and GSFI…FLLV.

It belongs to the MscL family. Homopentamer.

It localises to the cell inner membrane. In terms of biological role, channel that opens in response to stretch forces in the membrane lipid bilayer. May participate in the regulation of osmotic pressure changes within the cell. This Sinorhizobium fredii (strain NBRC 101917 / NGR234) protein is Large-conductance mechanosensitive channel.